Consider the following 1205-residue polypeptide: Plasma membrane calcium-transporting ATPase 4 (1205 aa).

At 1 to 100 the chain is on the cytoplasmic side; that stretch reads MTNPPGQSVS…KTFLELVWEA (100 aa). The chain crosses the membrane as a helical span at residues 101–121; that stretch reads LQDVTLIILEIAAIISLVLSF. The Extracellular portion of the chain corresponds to 122-147; that stretch reads YRPPGGDNEICGHIASSPEEEEEGET. A helical membrane pass occupies residues 148–168; the sequence is GWIEGAAILASVIIVVLVTAF. The Cytoplasmic segment spans residues 169–369; sequence NDWSKEKQFR…LAVQIGKAGL (201 aa). The disordered stretch occupies residues 294 to 318; sequence DDDDKKKKGKKQGAPENRNKAKTQD. S329 and S335 each carry phosphoserine. The chain crosses the membrane as a helical span at residues 370-390; it reads IMSVLTVVILILYFVVDNFVI. Topologically, residues 391–409 are extracellular; that stretch reads QRREWLPECTPVYIQYFVK. The chain crosses the membrane as a helical span at residues 410-430; sequence FFIIGVTVLVVAVPEGLPLAV. The Cytoplasmic portion of the chain corresponds to 431 to 844; sequence TISLAYSVKK…RNVYDSISKF (414 aa). D466 (4-aspartylphosphate intermediate) is an active-site residue. The Mg(2+) site is built by D786 and D790. Residues 845-865 traverse the membrane as a helical segment; sequence LQFQLTVNVVAVIVAFTGACI. Topologically, residues 866–872 are extracellular; it reads TQDSPLK. The chain crosses the membrane as a helical span at residues 873–893; sequence AVQMLWVNLIMDTFASLALAT. Topologically, residues 894-919 are cytoplasmic; sequence EPPTESLLRRRPYGRNKPLISRTMMK. The chain crosses the membrane as a helical span at residues 920-942; that stretch reads NILGHAVYQLLIVFLLVFAGDTL. Topologically, residues 943–956 are extracellular; that stretch reads FDIDSGRKAPLNSP. Residues 957 to 979 form a helical membrane-spanning segment; sequence PSQHYTIVFNTFVLMQLFNEINA. At 980–995 the chain is on the cytoplasmic side; it reads RKIHGEKNVFAGVYRN. The helical transmembrane segment at 996–1016 threads the bilayer; the sequence is IIFCTVVLGTFFCQIMIVELG. Over 1017-1029 the chain is Extracellular; the sequence is GKPFSCTSLTMEQ. Residues 1030–1050 form a helical membrane-spanning segment; it reads WMWCLFIGIGELLWGQVISAI. Residues 1051 to 1205 are Cytoplasmic-facing; that stretch reads PTKSLKFLKE…SPLPSLETPV (155 aa). 2 positions are modified to phosphoserine: S1065 and S1071. An Omega-N-methylarginine modification is found at R1072. The interval 1087–1104 is calmodulin-binding subdomain A; sequence LRRGQILWVRGLNRIQTQ. T1103 is subject to Phosphothreonine; by PKC. The calmodulin-binding subdomain B stretch occupies residues 1105-1114; sequence IRVVKLFHNN. The residue at position 1145 (S1145) is a Phosphoserine.

Belongs to the cation transport ATPase (P-type) (TC 3.A.3) family. Type IIB subfamily. In terms of assembly, interacts with PDZD11. Interacts with SLC35G1 and STIM1. Interacts with calmodulin. In terms of tissue distribution, specifically expressed by sperm in testis (at protein level).

It is found in the membrane. It localises to the cell projection. The protein localises to the cilium. Its subcellular location is the flagellum membrane. The catalysed reaction is Ca(2+)(in) + ATP + H2O = Ca(2+)(out) + ADP + phosphate + H(+). Its activity is regulated as follows. Activated by calcium/calmodulin. Its function is as follows. Calcium/calmodulin-regulated and magnesium-dependent enzyme that catalyzes the hydrolysis of ATP coupled with the transport of calcium out of the cell. By regulating sperm cell calcium homeostasis, may play a role in sperm motility. This is Plasma membrane calcium-transporting ATPase 4 from Mus musculus (Mouse).